A 320-amino-acid chain; its full sequence is Zinc finger protein 330 (320 aa).

The segment at 1–23 (MPKKKTGARKKAENRREREKQLR) is disordered. The short motif at 3–11 (KKKTGARKK) is the Nuclear localization signal element. Positions 10-22 (KKAENRREREKQL) are enriched in basic and acidic residues. 4 consecutive C4-type zinc fingers follow at residues 42–58 (CDKCQRRQKNRAFCYFC), 67–104 (CAQCGKTKCMMKSSDCVIKHAGVYSTGLAMVGAICDFC), 129–149 (CVECERGVWDHGGRIFSCSFC), and 175–189 (CVSCNRLGQHSCLRC). The segment at 206–320 (EKGKQPPCPK…GYAHYEEQEN (115 aa)) is disordered. Basic and acidic residues predominate over residues 216–225 (CGHETQETKD). Residues 269-285 (DEEEDEYEAEDDEEEED) are compositionally biased toward acidic residues. A Phosphoserine modification is found at S291.

The protein belongs to the NOA36 family. Widely expressed. Higher expression seen in heart and skeletal muscle.

The protein resides in the nucleus. It localises to the nucleolus. The protein localises to the chromosome. Its subcellular location is the centromere. This chain is Zinc finger protein 330 (ZNF330), found in Homo sapiens (Human).